Here is a 223-residue protein sequence, read N- to C-terminus: F420-dependent NADP reductase (223 aa).

Residues 9–12, 30–31, lysine 35, leucine 75, and valine 101 each bind NADP(+); these read TGDQ and SR.

Belongs to the F420-dependent NADP reductase family.

It catalyses the reaction reduced coenzyme F420-(gamma-L-Glu)(n) + NADP(+) = oxidized coenzyme F420-(gamma-L-Glu)(n) + NADPH + 2 H(+). In terms of biological role, catalyzes the reduction of NADP(+) with F420H(2) via hydride transfer, and the reverse reaction, i.e. the reduction of F420 with NADPH. Probably functions in the regeneration of NADPH required in biosynthetic reactions. This Methanocaldococcus jannaschii (strain ATCC 43067 / DSM 2661 / JAL-1 / JCM 10045 / NBRC 100440) (Methanococcus jannaschii) protein is F420-dependent NADP reductase (fno).